The following is a 260-amino-acid chain: tRNA (guanine-N(1)-)-methyltransferase (260 aa).

Residues Gly117 and 137-142 (LGDFVL) contribute to the S-adenosyl-L-methionine site.

Belongs to the RNA methyltransferase TrmD family. In terms of assembly, homodimer.

It localises to the cytoplasm. It catalyses the reaction guanosine(37) in tRNA + S-adenosyl-L-methionine = N(1)-methylguanosine(37) in tRNA + S-adenosyl-L-homocysteine + H(+). In terms of biological role, specifically methylates guanosine-37 in various tRNAs. The protein is tRNA (guanine-N(1)-)-methyltransferase of Cupriavidus necator (strain ATCC 17699 / DSM 428 / KCTC 22496 / NCIMB 10442 / H16 / Stanier 337) (Ralstonia eutropha).